The following is a 168-amino-acid chain: S-ribosylhomocysteine lyase (168 aa).

Residues H54, H58, and C128 each coordinate Fe cation.

This sequence belongs to the LuxS family. As to quaternary structure, homodimer. It depends on Fe cation as a cofactor.

The enzyme catalyses S-(5-deoxy-D-ribos-5-yl)-L-homocysteine = (S)-4,5-dihydroxypentane-2,3-dione + L-homocysteine. Its function is as follows. Involved in the synthesis of autoinducer 2 (AI-2) which is secreted by bacteria and is used to communicate both the cell density and the metabolic potential of the environment. The regulation of gene expression in response to changes in cell density is called quorum sensing. Catalyzes the transformation of S-ribosylhomocysteine (RHC) to homocysteine (HC) and 4,5-dihydroxy-2,3-pentadione (DPD). This Histophilus somni (strain 129Pt) (Haemophilus somnus) protein is S-ribosylhomocysteine lyase.